Reading from the N-terminus, the 337-residue chain is Fructose-1,6-bisphosphatase class 1 (337 aa).

Residues E94, D116, L118, and D119 each coordinate Mg(2+). Substrate is bound by residues 119 to 122 (DGSS), N210, and K276. E282 contacts Mg(2+).

It belongs to the FBPase class 1 family. Homotetramer. Mg(2+) serves as cofactor.

Its subcellular location is the cytoplasm. The catalysed reaction is beta-D-fructose 1,6-bisphosphate + H2O = beta-D-fructose 6-phosphate + phosphate. Its pathway is carbohydrate biosynthesis; gluconeogenesis. In Burkholderia vietnamiensis (strain G4 / LMG 22486) (Burkholderia cepacia (strain R1808)), this protein is Fructose-1,6-bisphosphatase class 1.